The primary structure comprises 110 residues: Secreted Ly-6/uPAR-related protein 1 (110 aa).

A signal peptide spans 1–22; sequence MTLRWAMWLLLLAAWSMGYGEA. A UPAR/Ly6 domain is found at 24 to 73; that stretch reads RCYTCEQPTAINSCKNIAQCKMEDTACKTVLETVEAAFPFNHSPMVTRSC. 5 disulfide bridges follow: Cys25–Cys50, Cys28–Cys37, Cys43–Cys73, Cys77–Cys93, and Cys94–Cys99.

Homodimer. Interacts with PLAU. Interacts with CHRNA7. In terms of tissue distribution, expressed in skin, eye, whole lung, trachea, esophagus and stomach. Widely expressed in various tissues including spleen and thymus but not pancreas. Expressed in macrophages, dendritic cells, T and B cells. Expressed in lung specifically in ciliated bronchial epithelial cells (at protein level). Expression is decreased in lungs of asthmatic model mice. Expressed in the cornea.

It is found in the secreted. In terms of biological role, has an antitumor activity. Was found to be a marker of late differentiation of the skin. Implicated in maintaining the physiological and structural integrity of the keratinocyte layers of the skin. In vitro down-regulates keratinocyte proliferation; the function may involve the proposed role as modulator of nicotinic acetylcholine receptors (nAChRs) activity. In vitro inhibits alpha-7-dependent nAChR currents in an allosteric manner. In T cells may be involved in regulation of intracellular Ca(2+) signaling. Seems to have a immunomodulatory function in the cornea. The function may implicate a possible role as a scavenger receptor for PLAU thereby blocking PLAU-dependent functions of PLAUR such as in cell migration and proliferation. The polypeptide is Secreted Ly-6/uPAR-related protein 1 (Slurp1) (Mus musculus (Mouse)).